The sequence spans 491 residues: Aspartyl/glutamyl-tRNA(Asn/Gln) amidotransferase subunit B (491 aa).

It belongs to the GatB/GatE family. GatB subfamily. As to quaternary structure, heterotrimer of A, B and C subunits.

It catalyses the reaction L-glutamyl-tRNA(Gln) + L-glutamine + ATP + H2O = L-glutaminyl-tRNA(Gln) + L-glutamate + ADP + phosphate + H(+). The enzyme catalyses L-aspartyl-tRNA(Asn) + L-glutamine + ATP + H2O = L-asparaginyl-tRNA(Asn) + L-glutamate + ADP + phosphate + 2 H(+). Allows the formation of correctly charged Asn-tRNA(Asn) or Gln-tRNA(Gln) through the transamidation of misacylated Asp-tRNA(Asn) or Glu-tRNA(Gln) in organisms which lack either or both of asparaginyl-tRNA or glutaminyl-tRNA synthetases. The reaction takes place in the presence of glutamine and ATP through an activated phospho-Asp-tRNA(Asn) or phospho-Glu-tRNA(Gln). The sequence is that of Aspartyl/glutamyl-tRNA(Asn/Gln) amidotransferase subunit B from Burkholderia lata (strain ATCC 17760 / DSM 23089 / LMG 22485 / NCIMB 9086 / R18194 / 383).